Consider the following 242-residue polypeptide: UPF0246 protein SPD_1378 (242 aa).

Belongs to the UPF0246 family.

The protein is UPF0246 protein SPD_1378 of Streptococcus pneumoniae serotype 2 (strain D39 / NCTC 7466).